Here is a 453-residue protein sequence, read N- to C-terminus: Luminescence regulatory protein LuxO (453 aa).

A Response regulatory domain is found at 1 to 112; the sequence is MVEDTASVAA…RLRVTVNNAI (112 aa). The residue at position 47 (aspartate 47) is a 4-aspartylphosphate. One can recognise a Sigma-54 factor interaction domain in the interval 133–362; it reads FIGSSQTMQQ…LQNVLRNIVV (230 aa). ATP is bound by residues 161–168 and 224–233; these read GESGTGKE and ADGGTLFLDE.

Its function is as follows. Acts negatively to control the expression of luminescence. At low cell density, LuxO is phosphorylated, and together with sigma-54, causes repression of the luxCDABEGH operon. This repression could be indirect, LuxO could activate a negative regulator of luminescence. At high cell density, LuxO is dephosphorylated and inactive, therefore the luxCDABEGH operon is not repressed and light is emitted. LuxO and sigma-54 have also a role in activating the production of siderophore and in regulating the rugose colony morphology phenotype. In Vibrio campbellii (strain ATCC BAA-1116), this protein is Luminescence regulatory protein LuxO (luxO).